The following is a 302-amino-acid chain: Phosphoribosylaminoimidazole-succinocarboxamide synthase (302 aa).

Belongs to the SAICAR synthetase family.

The catalysed reaction is 5-amino-1-(5-phospho-D-ribosyl)imidazole-4-carboxylate + L-aspartate + ATP = (2S)-2-[5-amino-1-(5-phospho-beta-D-ribosyl)imidazole-4-carboxamido]succinate + ADP + phosphate + 2 H(+). The protein operates within purine metabolism; IMP biosynthesis via de novo pathway; 5-amino-1-(5-phospho-D-ribosyl)imidazole-4-carboxamide from 5-amino-1-(5-phospho-D-ribosyl)imidazole-4-carboxylate: step 1/2. This is Phosphoribosylaminoimidazole-succinocarboxamide synthase from Leptothrix cholodnii (strain ATCC 51168 / LMG 8142 / SP-6) (Leptothrix discophora (strain SP-6)).